We begin with the raw amino-acid sequence, 332 residues long: Tetraacyldisaccharide 4'-kinase (332 aa).

ATP is bound at residue 58–65 (TVGGSGKT).

It belongs to the LpxK family.

It carries out the reaction a lipid A disaccharide + ATP = a lipid IVA + ADP + H(+). It functions in the pathway glycolipid biosynthesis; lipid IV(A) biosynthesis; lipid IV(A) from (3R)-3-hydroxytetradecanoyl-[acyl-carrier-protein] and UDP-N-acetyl-alpha-D-glucosamine: step 6/6. Its function is as follows. Transfers the gamma-phosphate of ATP to the 4'-position of a tetraacyldisaccharide 1-phosphate intermediate (termed DS-1-P) to form tetraacyldisaccharide 1,4'-bis-phosphate (lipid IVA). The chain is Tetraacyldisaccharide 4'-kinase from Shewanella piezotolerans (strain WP3 / JCM 13877).